The sequence spans 626 residues: Myelin-associated glycoprotein (626 aa).

The first 19 residues, Met1–Gly19, serve as a signal peptide directing secretion. The tract at residues Gly20–Ala325 is interaction with RTN4R and RTN4RL2. Topologically, residues Gly20 to Pro516 are extracellular. Positions Trp22–Asp120 constitute an Ig-like V-type domain. 3 cysteine pairs are disulfide-bonded: Cys37–Cys165, Cys42–Cys100, and Cys159–Cys217. Tyr65–Lys67 contacts a ganglioside GT1b (d18:1(4E)). An N-linked (GlcNAc...) asparagine glycan is attached at Asn99. A ganglioside GT1b (d18:1(4E))-binding positions include Arg118 and Tyr124 to Thr128. 4 consecutive Ig-like C2-type domains span residues Asn139–Lys237, Val241–Ala325, Trp327–Ala412, and Pro413–Arg508. 2 N-linked (GlcNAc...) asparagine glycosylation sites follow: Asn223 and Asn246. A disulfide bridge connects residues Cys261 and Cys305. Asn315 and Asn332 each carry an N-linked (GlcNAc...) asparagine glycan. Cys347 and Cys392 form a disulfide bridge. N-linked (GlcNAc...) asparagine glycosylation occurs at Asn406. 2 disulfides stabilise this stretch: Cys421/Cys430 and Cys432/Cys488. 2 N-linked (GlcNAc...) asparagine glycosylation sites follow: Asn450 and Asn454. A helical membrane pass occupies residues Val517–Thr536. The S-palmitoyl cysteine moiety is linked to residue Cys531. The Cytoplasmic segment spans residues Arg537–Lys626. Ser545, Ser547, and Ser549 each carry phosphoserine. Residues Leu577–Lys626 form a required for normal axon myelination in the central nervous system region. A disordered region spans residues Arg581–Lys608.

It belongs to the immunoglobulin superfamily. SIGLEC (sialic acid binding Ig-like lectin) family. Monomer and homodimer. Interacts (via the first three N-terminal Ig-like domains) with RTN4R and RTN4RL2. Interacts with isoform 2 of BSG. In terms of processing, N-glycosylated. Phosphorylated on tyrosine residues. Post-translationally, ubiquitinated, leading to proteasomal degradation. As to expression, detected in myelin. Detected in olfactory bulb and throughout the brain (at protein level). Detected in brain.

The protein resides in the cell membrane. The protein localises to the membrane raft. Its function is as follows. Adhesion molecule that mediates interactions between myelinating cells and neurons by binding to neuronal sialic acid-containing gangliosides and to the glycoproteins RTN4R and RTN4RL2. Not required for initial myelination, but seems to play a role in the maintenance of normal axon myelination. Protects motoneurons against apoptosis, also after injury; protection against apoptosis is probably mediated via interaction with neuronal RTN4R and RTN4RL2. Required to prevent degeneration of myelinated axons in adults; this probably depends on binding to gangliosides on the axon cell membrane. Negative regulator of neurite outgrowth; in dorsal root ganglion neurons the inhibition is mediated primarily via binding to neuronal RTN4R or RTN4RL2 and to a lesser degree via binding to neuronal gangliosides. In cerebellar granule cells the inhibition is mediated primarily via binding to neuronal gangliosides. In sensory neurons, inhibition of neurite extension depends only partially on RTN4R, RTN4RL2 and gangliosides. Inhibits axon longitudinal growth. Inhibits axon outgrowth by binding to RTN4R. Preferentially binds to alpha-2,3-linked sialic acid. Binds ganglioside Gt1b. In Rattus norvegicus (Rat), this protein is Myelin-associated glycoprotein (Mag).